Here is a 108-residue protein sequence, read N- to C-terminus: Biogenesis of lysosome-related organelles complex 1 subunit CNL1 (108 aa).

Belongs to the BLOC1S4 family. Component of the biogenesis of lysosome-related organelles complex-1 (BLOC-1).

Its subcellular location is the cytoplasm. Its function is as follows. Component of the biogenesis of lysosome-related organelles complex-1 (BLOC-1), a complex that is involved in endosomal cargo sorting. This is Biogenesis of lysosome-related organelles complex 1 subunit CNL1 (CLN1) from Zygosaccharomyces rouxii (strain ATCC 2623 / CBS 732 / NBRC 1130 / NCYC 568 / NRRL Y-229).